We begin with the raw amino-acid sequence, 475 residues long: Ribulose bisphosphate carboxylase large chain (475 aa).

Positions 1–2 (MS) are excised as a propeptide. Residue proline 3 is modified to N-acetylproline. N6,N6,N6-trimethyllysine is present on lysine 14. Positions 123 and 173 each coordinate substrate. The active-site Proton acceptor is lysine 175. Residue lysine 177 coordinates substrate. Residues lysine 201, aspartate 203, and glutamate 204 each contribute to the Mg(2+) site. An N6-carboxylysine modification is found at lysine 201. The active-site Proton acceptor is histidine 294. Substrate-binding residues include arginine 295, histidine 327, and serine 379.

It belongs to the RuBisCO large chain family. Type I subfamily. Heterohexadecamer of 8 large chains and 8 small chains; disulfide-linked. The disulfide link is formed within the large subunit homodimers. It depends on Mg(2+) as a cofactor. The disulfide bond which can form in the large chain dimeric partners within the hexadecamer appears to be associated with oxidative stress and protein turnover.

It is found in the plastid. Its subcellular location is the chloroplast. It catalyses the reaction 2 (2R)-3-phosphoglycerate + 2 H(+) = D-ribulose 1,5-bisphosphate + CO2 + H2O. The catalysed reaction is D-ribulose 1,5-bisphosphate + O2 = 2-phosphoglycolate + (2R)-3-phosphoglycerate + 2 H(+). Functionally, ruBisCO catalyzes two reactions: the carboxylation of D-ribulose 1,5-bisphosphate, the primary event in carbon dioxide fixation, as well as the oxidative fragmentation of the pentose substrate in the photorespiration process. Both reactions occur simultaneously and in competition at the same active site. This is Ribulose bisphosphate carboxylase large chain from Amaranthus tricolor (Joseph's coat).